The primary structure comprises 400 residues: Subtilisin-like protease 7 (400 aa).

Residues M1–G20 form the signal peptide. Residues A21–N119 constitute a propeptide that is removed on maturation. Residues K36 to I118 form the Inhibitor I9 domain. The region spanning S129 to M400 is the Peptidase S8 domain. Residues D161 and H192 each act as charge relay system in the active site. N252 is a glycosylation site (N-linked (GlcNAc...) asparagine). Residue S346 is the Charge relay system of the active site. N396 carries an N-linked (GlcNAc...) asparagine glycan.

The protein belongs to the peptidase S8 family.

The protein localises to the secreted. Its function is as follows. Secreted subtilisin-like serine protease with keratinolytic activity that contributes to pathogenicity. The sequence is that of Subtilisin-like protease 7 (SUB7) from Trichophyton violaceum.